A 470-amino-acid chain; its full sequence is Uronate isomerase (470 aa).

The protein belongs to the metallo-dependent hydrolases superfamily. Uronate isomerase family.

The catalysed reaction is D-glucuronate = D-fructuronate. It catalyses the reaction aldehydo-D-galacturonate = keto-D-tagaturonate. It participates in carbohydrate metabolism; pentose and glucuronate interconversion. The protein is Uronate isomerase of Salmonella typhi.